We begin with the raw amino-acid sequence, 278 residues long: uncharacterized protein (278 aa).

Over residues 1–16 the composition is skewed to basic and acidic residues; it reads MFGLKVKDAQKDDQKS. 2 disordered regions span residues 1–86 and 98–126; these read MFGL…RGSN and FGTTSSSESGQSGTQGSTPSNPGPWTPWL. Composition is skewed to low complexity over residues 33–45 and 99–117; these read QGTSTTTQRRGSS and GTTSSSESGQSGTQGSTPS.

Belongs to the adhesin P1 family.

This is an uncharacterized protein from Mycoplasma pneumoniae (strain ATCC 29342 / M129 / Subtype 1) (Mycoplasmoides pneumoniae).